The sequence spans 276 residues: Ribosomal RNA small subunit methyltransferase A (276 aa).

6 residues coordinate S-adenosyl-L-methionine: Asn-27, Leu-29, Gly-54, Glu-75, Asp-101, and Asn-123.

The protein belongs to the class I-like SAM-binding methyltransferase superfamily. rRNA adenine N(6)-methyltransferase family. RsmA subfamily.

It is found in the cytoplasm. The catalysed reaction is adenosine(1518)/adenosine(1519) in 16S rRNA + 4 S-adenosyl-L-methionine = N(6)-dimethyladenosine(1518)/N(6)-dimethyladenosine(1519) in 16S rRNA + 4 S-adenosyl-L-homocysteine + 4 H(+). Specifically dimethylates two adjacent adenosines (A1518 and A1519) in the loop of a conserved hairpin near the 3'-end of 16S rRNA in the 30S particle. May play a critical role in biogenesis of 30S subunits. The chain is Ribosomal RNA small subunit methyltransferase A from Bartonella quintana (strain Toulouse) (Rochalimaea quintana).